The sequence spans 63 residues: Large ribosomal subunit protein uL29 (63 aa).

It belongs to the universal ribosomal protein uL29 family.

This chain is Large ribosomal subunit protein uL29, found in Bordetella petrii (strain ATCC BAA-461 / DSM 12804 / CCUG 43448).